Here is a 396-residue protein sequence, read N- to C-terminus: S-adenosylmethionine synthase (396 aa).

His-16 is a binding site for ATP. Asp-18 is a Mg(2+) binding site. Residue Glu-44 participates in K(+) binding. Glu-57 and Gln-100 together coordinate L-methionine. The segment at Gln-100–Asn-110 is flexible loop. ATP contacts are provided by residues Asp-162 to Lys-164, Arg-228 to Phe-229, Asp-237, Arg-243 to Lys-244, Ala-260, and Lys-264. Asp-237 is a binding site for L-methionine. Lys-268 is a binding site for L-methionine.

Belongs to the AdoMet synthase family. Homotetramer; dimer of dimers. Requires Mg(2+) as cofactor. The cofactor is K(+).

Its subcellular location is the cytoplasm. It catalyses the reaction L-methionine + ATP + H2O = S-adenosyl-L-methionine + phosphate + diphosphate. It functions in the pathway amino-acid biosynthesis; S-adenosyl-L-methionine biosynthesis; S-adenosyl-L-methionine from L-methionine: step 1/1. Catalyzes the formation of S-adenosylmethionine (AdoMet) from methionine and ATP. The overall synthetic reaction is composed of two sequential steps, AdoMet formation and the subsequent tripolyphosphate hydrolysis which occurs prior to release of AdoMet from the enzyme. The polypeptide is S-adenosylmethionine synthase (Myxococcus xanthus (strain DK1622)).